The sequence spans 312 residues: MVVTMRAALRLMLISTVSLELIIGILANVFIALVNIIDWIKRGKISAVDKIYMGLAISRTAFVLSVITGFLIAFLDPASLGIGIMIRLLTMSWTVTNHFSVWFATCLSIFYFLKITNFSNTVFLALKWKVKKVVSVTLVVSLIILFINVIVIHIYTDRFQVNMVQKCGANNTLRAYGLFLSISTVFTFIPFTASLTMFLLLIFSLWRHLKTMHHNATGSRDVSTVAHIKGLQTVVAFLLLYTVFAMSLFSQSLSIDAQHTNLLSHFLRCIGVAFPSGHSCALILGNNKLRQASLSVIFWLRCKYKHTENQGP.

At 1-16 the chain is on the extracellular side; sequence MVVTMRAALRLMLIST. Residues 17 to 37 form a helical membrane-spanning segment; the sequence is VSLELIIGILANVFIALVNII. The Cytoplasmic portion of the chain corresponds to 38–65; it reads DWIKRGKISAVDKIYMGLAISRTAFVLS. A helical transmembrane segment spans residues 66 to 86; sequence VITGFLIAFLDPASLGIGIMI. Residues 87-92 lie on the Extracellular side of the membrane; it reads RLLTMS. A helical membrane pass occupies residues 93-113; it reads WTVTNHFSVWFATCLSIFYFL. At 114–133 the chain is on the cytoplasmic side; sequence KITNFSNTVFLALKWKVKKV. The chain crosses the membrane as a helical span at residues 134–154; that stretch reads VSVTLVVSLIILFINVIVIHI. The Extracellular segment spans residues 155 to 184; it reads YTDRFQVNMVQKCGANNTLRAYGLFLSIST. Residue N170 is glycosylated (N-linked (GlcNAc...) asparagine). Residues 185 to 205 traverse the membrane as a helical segment; sequence VFTFIPFTASLTMFLLLIFSL. Residues 206-229 are Cytoplasmic-facing; the sequence is WRHLKTMHHNATGSRDVSTVAHIK. A helical membrane pass occupies residues 230 to 250; that stretch reads GLQTVVAFLLLYTVFAMSLFS. Residues 251–264 are Extracellular-facing; sequence QSLSIDAQHTNLLS. The helical transmembrane segment at 265 to 285 threads the bilayer; that stretch reads HFLRCIGVAFPSGHSCALILG. At 286-312 the chain is on the cytoplasmic side; sequence NNKLRQASLSVIFWLRCKYKHTENQGP.

This sequence belongs to the G-protein coupled receptor T2R family.

The protein localises to the membrane. Its function is as follows. Gustducin-coupled receptor implicated in the perception of bitter compounds in the oral cavity and the gastrointestinal tract. Signals through PLCB2 and the calcium-regulated cation channel TRPM5. This chain is Taste receptor type 2 member 103, found in Rattus norvegicus (Rat).